Here is a 442-residue protein sequence, read N- to C-terminus: Transducin beta-like protein 2 (442 aa).

The interval 36-71 is disordered; it reads EKPSQPVCQKENEPKKSGSKKQKQNQRVRKEKPQQH. A compositionally biased stretch (basic residues) spans 52-65; that stretch reads SGSKKQKQNQRVRK. WD repeat units follow at residues 84-123, 130-170, 182-222, 224-263, 273-312, 323-362, and 366-404; these read SHSG…QREH, VELD…DGGF, KHKA…STIN, NQMN…GEFQ, GHSA…KKQQ, EEAS…KEEY, and VHGE…RAVV. Lys164 participates in a covalent cross-link: Glycyl lysine isopeptide (Lys-Gly) (interchain with G-Cter in SUMO2). Thr428 bears the Phosphothreonine mark.

The chain is Transducin beta-like protein 2 (Tbl2) from Mus musculus (Mouse).